Reading from the N-terminus, the 556-residue chain is Glutamine--tRNA ligase (556 aa).

The 'HIGH' region signature appears at 34–44 (PEPNGYLHIGH). ATP is bound by residues 35 to 37 (EPN) and 41 to 47 (HIGHAKS). L-glutamine contacts are provided by D67 and Y212. ATP is bound by residues T231, 261 to 262 (RL), and 269 to 271 (MSK). A 'KMSKS' region motif is present at residues 268–272 (VMSKR).

It belongs to the class-I aminoacyl-tRNA synthetase family. Monomer.

Its subcellular location is the cytoplasm. The catalysed reaction is tRNA(Gln) + L-glutamine + ATP = L-glutaminyl-tRNA(Gln) + AMP + diphosphate. The chain is Glutamine--tRNA ligase from Vibrio cholerae serotype O1 (strain ATCC 39315 / El Tor Inaba N16961).